The primary structure comprises 216 residues: Small ribosomal subunit protein uS3c (216 aa).

The region spanning 39–109 (IRSYINRELE…SIRINVIELT (71 aa)) is the KH type-2 domain.

Belongs to the universal ribosomal protein uS3 family. Part of the 30S ribosomal subunit.

The protein localises to the plastid. Its subcellular location is the chloroplast. This Guillardia theta (Cryptophyte) protein is Small ribosomal subunit protein uS3c (rps3).